The following is a 166-amino-acid chain: Arginine repressor (166 aa).

It belongs to the ArgR family.

The protein localises to the cytoplasm. The protein operates within amino-acid biosynthesis; L-arginine biosynthesis [regulation]. Regulates arginine biosynthesis genes. This chain is Arginine repressor, found in Mycobacterium ulcerans (strain Agy99).